Reading from the N-terminus, the 261-residue chain is Indole-3-glycerol phosphate synthase (261 aa).

The protein belongs to the TrpC family.

It carries out the reaction 1-(2-carboxyphenylamino)-1-deoxy-D-ribulose 5-phosphate + H(+) = (1S,2R)-1-C-(indol-3-yl)glycerol 3-phosphate + CO2 + H2O. It functions in the pathway amino-acid biosynthesis; L-tryptophan biosynthesis; L-tryptophan from chorismate: step 4/5. The sequence is that of Indole-3-glycerol phosphate synthase from Paraburkholderia xenovorans (strain LB400).